A 418-amino-acid chain; its full sequence is Histidine--tRNA ligase (418 aa).

It belongs to the class-II aminoacyl-tRNA synthetase family. As to quaternary structure, homodimer.

The protein resides in the cytoplasm. It catalyses the reaction tRNA(His) + L-histidine + ATP = L-histidyl-tRNA(His) + AMP + diphosphate + H(+). The protein is Histidine--tRNA ligase of Thermoanaerobacter sp. (strain X514).